Here is a 168-residue protein sequence, read N- to C-terminus: Protein-export protein SecB (168 aa).

It belongs to the SecB family. Homotetramer, a dimer of dimers. One homotetramer interacts with 1 SecA dimer.

It localises to the cytoplasm. One of the proteins required for the normal export of preproteins out of the cell cytoplasm. It is a molecular chaperone that binds to a subset of precursor proteins, maintaining them in a translocation-competent state. It also specifically binds to its receptor SecA. The sequence is that of Protein-export protein SecB from Saccharophagus degradans (strain 2-40 / ATCC 43961 / DSM 17024).